The following is an 883-amino-acid chain: Phosphoenolpyruvate carboxylase (883 aa).

Active-site residues include His138 and Lys546.

This sequence belongs to the PEPCase type 1 family. The cofactor is Mg(2+).

The catalysed reaction is oxaloacetate + phosphate = phosphoenolpyruvate + hydrogencarbonate. In terms of biological role, forms oxaloacetate, a four-carbon dicarboxylic acid source for the tricarboxylic acid cycle. The protein is Phosphoenolpyruvate carboxylase of Salmonella arizonae (strain ATCC BAA-731 / CDC346-86 / RSK2980).